Consider the following 655-residue polypeptide: Integrin beta-5 (655 aa).

One can recognise a VWFA domain in the interval 1 to 234 (DLSLSMKDDL…QLIINAYNSI (234 aa)). Residues 1–575 (DLSLSMKDDL…REPECGNTPN (575 aa)) lie on the Extracellular side of the membrane. Residues Ser-3 and Ser-5 each contribute to the Mg(2+) site. Residues Ser-5, Asp-8, Asp-9, and Asp-40 each contribute to the Ca(2+) site. A disulfide bond links Cys-58 and Cys-67. Ca(2+)-binding residues include Asn-98, Asp-100, Pro-102, and Glu-103. Residue Glu-103 coordinates Mg(2+). A disulfide bridge connects residues Cys-115 and Cys-156. Asn-203 carries N-linked (GlcNAc...) asparagine glycosylation. Residue Gly-218 coordinates Ca(2+). Cystine bridges form between Cys-257/Cys-269, Cys-289/Cys-317, Cys-321/Cys-340, Cys-332/Cys-343, Cys-345/Cys-354, Cys-356/Cys-386, Cys-369/Cys-384, Cys-378/Cys-389, Cys-391/Cys-404, Cys-406/Cys-427, Cys-411/Cys-425, Cys-419/Cys-430, and Cys-432/Cys-441. N-linked (GlcNAc...) asparagine glycosylation is present at Asn-316. I-EGF domains follow at residues 321-355 (CSVG…TRCE), 356-405 (CQDG…PFCE), 406-442 (CDNF…DNCN), and 443-482 (CSTD…EMCE). The N-linked (GlcNAc...) asparagine glycan is linked to Asn-408. N-linked (GlcNAc...) asparagine glycosylation is present at Asn-442. Intrachain disulfides connect Cys-443–Cys-466, Cys-450–Cys-464, Cys-458–Cys-469, Cys-471–Cys-481, Cys-484–Cys-487, Cys-491–Cys-538, Cys-497–Cys-517, Cys-500–Cys-513, and Cys-546–Cys-570. Residues Asn-510 and Asn-561 are each glycosylated (N-linked (GlcNAc...) asparagine). The chain crosses the membrane as a helical span at residues 576-598 (AMTILLAVVGSILLVGLALLAIW). Residues 599-655 (KLLVTIHDRREFAKFQSERSRARYEMASNPLYRKPISTHTVDFTFNKFNKSYNGTVD) lie on the Cytoplasmic side of the membrane. Position 626 is a phosphoserine (Ser-626).

It belongs to the integrin beta chain family. As to quaternary structure, heterodimer of an alpha and a beta subunit. Beta-5 (ITGB5) associates with alpha-V (ITGAV). Interacts with MYO10. Interacts with DAB2. Integrin ITGAV:ITGB5 interacts with FBLN5 (via N-terminus). ITGAV:ITGB5 interacts with CCN3. Interacts with tensin TNS3; TNS3 also interacts with PEAK1, thus acting as an adapter molecule to bridge the association of PEAK1 with ITGB5.

The protein resides in the cell membrane. In terms of biological role, integrin alpha-V/beta-5 (ITGAV:ITGB5) is a receptor for fibronectin. It recognizes the sequence R-G-D in its ligand. This Papio cynocephalus (Yellow baboon) protein is Integrin beta-5 (ITGB5).